Reading from the N-terminus, the 664-residue chain is Glycine--tRNA ligase beta subunit (664 aa).

It belongs to the class-II aminoacyl-tRNA synthetase family. Tetramer of two alpha and two beta subunits.

It is found in the cytoplasm. It catalyses the reaction tRNA(Gly) + glycine + ATP = glycyl-tRNA(Gly) + AMP + diphosphate. This chain is Glycine--tRNA ligase beta subunit, found in Rickettsia peacockii (strain Rustic).